The chain runs to 495 residues: Glycerol kinase (495 aa).

Residue threonine 13 coordinates ADP. The ATP site is built by threonine 13, threonine 14, and serine 15. Sn-glycerol 3-phosphate is bound at residue threonine 13. Arginine 17 is a binding site for ADP. Positions 83, 84, 135, and 244 each coordinate sn-glycerol 3-phosphate. Glycerol is bound by residues arginine 83, glutamate 84, tyrosine 135, aspartate 244, and glutamine 245. Residues threonine 266 and glycine 309 each contribute to the ADP site. ATP is bound by residues threonine 266, glycine 309, glutamine 313, and glycine 410. Positions 410 and 414 each coordinate ADP.

The protein belongs to the FGGY kinase family.

The catalysed reaction is glycerol + ATP = sn-glycerol 3-phosphate + ADP + H(+). The protein operates within polyol metabolism; glycerol degradation via glycerol kinase pathway; sn-glycerol 3-phosphate from glycerol: step 1/1. With respect to regulation, inhibited by fructose 1,6-bisphosphate (FBP). Key enzyme in the regulation of glycerol uptake and metabolism. Catalyzes the phosphorylation of glycerol to yield sn-glycerol 3-phosphate. This chain is Glycerol kinase, found in Shewanella amazonensis (strain ATCC BAA-1098 / SB2B).